Here is a 397-residue protein sequence, read N- to C-terminus: Tryptophan synthase beta chain (397 aa).

Lys87 carries the post-translational modification N6-(pyridoxal phosphate)lysine.

Belongs to the TrpB family. Tetramer of two alpha and two beta chains. Pyridoxal 5'-phosphate is required as a cofactor.

The catalysed reaction is (1S,2R)-1-C-(indol-3-yl)glycerol 3-phosphate + L-serine = D-glyceraldehyde 3-phosphate + L-tryptophan + H2O. Its pathway is amino-acid biosynthesis; L-tryptophan biosynthesis; L-tryptophan from chorismate: step 5/5. In terms of biological role, the beta subunit is responsible for the synthesis of L-tryptophan from indole and L-serine. This Escherichia coli O139:H28 (strain E24377A / ETEC) protein is Tryptophan synthase beta chain.